We begin with the raw amino-acid sequence, 588 residues long: Aspartate--tRNA ligase (588 aa).

Residue glutamate 177 participates in L-aspartate binding. The aspartate stretch occupies residues 201–204; the sequence is QIFK. Arginine 223 lines the L-aspartate pocket. Residues 223–225 and glutamine 232 contribute to the ATP site; that span reads RDE. Histidine 451 provides a ligand contact to L-aspartate. Glutamate 485 is an ATP binding site. Arginine 492 serves as a coordination point for L-aspartate. 537 to 540 is an ATP binding site; sequence GLDR.

The protein belongs to the class-II aminoacyl-tRNA synthetase family. Type 1 subfamily. As to quaternary structure, homodimer.

The protein localises to the cytoplasm. It catalyses the reaction tRNA(Asp) + L-aspartate + ATP = L-aspartyl-tRNA(Asp) + AMP + diphosphate. Catalyzes the attachment of L-aspartate to tRNA(Asp) in a two-step reaction: L-aspartate is first activated by ATP to form Asp-AMP and then transferred to the acceptor end of tRNA(Asp). The chain is Aspartate--tRNA ligase from Staphylococcus saprophyticus subsp. saprophyticus (strain ATCC 15305 / DSM 20229 / NCIMB 8711 / NCTC 7292 / S-41).